The chain runs to 175 residues: 3-hydroxydecanoyl-[acyl-carrier-protein] dehydratase (175 aa).

His71 is an active-site residue.

It belongs to the thioester dehydratase family. FabA subfamily. As to quaternary structure, homodimer.

The protein resides in the cytoplasm. It catalyses the reaction a (3R)-hydroxyacyl-[ACP] = a (2E)-enoyl-[ACP] + H2O. The enzyme catalyses (3R)-hydroxydecanoyl-[ACP] = (2E)-decenoyl-[ACP] + H2O. It carries out the reaction (2E)-decenoyl-[ACP] = (3Z)-decenoyl-[ACP]. It participates in lipid metabolism; fatty acid biosynthesis. Its function is as follows. Necessary for the introduction of cis unsaturation into fatty acids. Catalyzes the dehydration of (3R)-3-hydroxydecanoyl-ACP to E-(2)-decenoyl-ACP and then its isomerization to Z-(3)-decenoyl-ACP. Can catalyze the dehydratase reaction for beta-hydroxyacyl-ACPs with saturated chain lengths up to 16:0, being most active on intermediate chain length. This Rhodopseudomonas palustris (strain ATCC BAA-98 / CGA009) protein is 3-hydroxydecanoyl-[acyl-carrier-protein] dehydratase.